The primary structure comprises 595 residues: GPI mannosyltransferase 3 (595 aa).

10 consecutive transmembrane segments (helical) span residues 58–78 (YAFP…GVAT), 85–105 (LAHA…GVAA), 128–148 (GPRV…VLLV), 185–207 (FFAT…LYHW), 212–232 (GLDV…FACL), 235–255 (PTNV…LVRS), 260–280 (LLLT…CANI), 289–309 (GVLL…LAAF), 319–339 (LLQS…GALL), and 413–433 (VQSL…VLNT).

It belongs to the glycosyltransferase 22 family. PIGB subfamily.

It localises to the endoplasmic reticulum membrane. The protein operates within glycolipid biosynthesis; glycosylphosphatidylinositol-anchor biosynthesis. Mannosyltransferase involved in glycosylphosphatidylinositol-anchor biosynthesis. Transfers the third mannose to Man2-GlcN-acyl-PI during GPI precursor assembly. The polypeptide is GPI mannosyltransferase 3 (GPI10) (Eremothecium gossypii (strain ATCC 10895 / CBS 109.51 / FGSC 9923 / NRRL Y-1056) (Yeast)).